The sequence spans 360 residues: Mannose-1-phosphate guanylyltransferase catalytic subunit beta (360 aa).

The interval 2–222 is substrate-binding domain; sequence KALILVGGYG…QGFWMDIGQP (221 aa). Aspartate 110 contributes to the GDP-alpha-D-mannose binding site. A Mg(2+)-binding site is contributed by aspartate 110. Lysine 162 is a catalytic residue. Residue aspartate 218 coordinates GDP-alpha-D-mannose. Aspartate 218 provides a ligand contact to Mg(2+). The hexapeptide repeat domain stretch occupies residues 245-360; sequence HVGPGFIGNV…ESVPEPRIIM (116 aa).

This sequence belongs to the transferase hexapeptide repeat family. In terms of assembly, component of the GMPPA-GMPPB mannose-1-phosphate guanylyltransferase complex composed of 4 gmppa subunits and 8 gmppb subunits; the complex is organized into three layers, a central layer made up of 2 gmppa dimers sandwiched between two layers each made up of 2 gmppb dimers. Catalytic activity of gmppb is reduced when part of the complex and binding of GDP-alpha-D-Mannose by gmppa induces allosteric feedback inhibition of gmppb. It depends on Mg(2+) as a cofactor.

It catalyses the reaction alpha-D-mannose 1-phosphate + GTP + H(+) = GDP-alpha-D-mannose + diphosphate. It functions in the pathway nucleotide-sugar biosynthesis; GDP-alpha-D-mannose biosynthesis; GDP-alpha-D-mannose from alpha-D-mannose 1-phosphate (GTP route): step 1/1. Its activity is regulated as follows. Enzyme activity is reduced by incorporation into the GMPPA-GMPPB mannose-1-phosphate guanylyltransferase complex. Allosterically inhibited, when part of the GMPPA-GMPPB complex, by GDP-alpha-D-mannose binding to GMPPA. In terms of biological role, catalytic subunit of the GMPPA-GMPPB mannose-1-phosphate guanylyltransferase complex. Catalyzes the formation of GDP-mannose, an essential precursor of glycan moieties of glycoproteins and glycolipids. Can catalyze the reverse reaction in vitro. Together with GMPPA regulates GDP-alpha-D-mannose levels. The polypeptide is Mannose-1-phosphate guanylyltransferase catalytic subunit beta (gmppb) (Xenopus tropicalis (Western clawed frog)).